A 715-amino-acid polypeptide reads, in one-letter code: Fatty acid oxidation complex subunit alpha (715 aa).

Residues 1–190 (MIYEGKAITV…KVSAVDAVVT (190 aa)) are enoyl-CoA hydratase/isomerase. Aspartate 297 is a substrate binding site. The interval 312-715 (KDVKQAAVLG…MAKNGQSFFG (404 aa)) is 3-hydroxyacyl-CoA dehydrogenase. Residues methionine 325, aspartate 344, 401-403 (VVE), lysine 408, and serine 430 contribute to the NAD(+) site. The active-site For 3-hydroxyacyl-CoA dehydrogenase activity is histidine 451. An NAD(+)-binding site is contributed by asparagine 454. Asparagine 501 and tyrosine 660 together coordinate substrate.

It in the N-terminal section; belongs to the enoyl-CoA hydratase/isomerase family. This sequence in the C-terminal section; belongs to the 3-hydroxyacyl-CoA dehydrogenase family. In terms of assembly, heterotetramer of two alpha chains (FadB) and two beta chains (FadA).

It carries out the reaction a (3S)-3-hydroxyacyl-CoA + NAD(+) = a 3-oxoacyl-CoA + NADH + H(+). The catalysed reaction is a (3S)-3-hydroxyacyl-CoA = a (2E)-enoyl-CoA + H2O. It catalyses the reaction a 4-saturated-(3S)-3-hydroxyacyl-CoA = a (3E)-enoyl-CoA + H2O. The enzyme catalyses (3S)-3-hydroxybutanoyl-CoA = (3R)-3-hydroxybutanoyl-CoA. It carries out the reaction a (3Z)-enoyl-CoA = a 4-saturated (2E)-enoyl-CoA. The catalysed reaction is a (3E)-enoyl-CoA = a 4-saturated (2E)-enoyl-CoA. The protein operates within lipid metabolism; fatty acid beta-oxidation. Functionally, involved in the aerobic and anaerobic degradation of long-chain fatty acids via beta-oxidation cycle. Catalyzes the formation of 3-oxoacyl-CoA from enoyl-CoA via L-3-hydroxyacyl-CoA. It can also use D-3-hydroxyacyl-CoA and cis-3-enoyl-CoA as substrate. The chain is Fatty acid oxidation complex subunit alpha from Pseudomonas fragi.